The primary structure comprises 155 residues: DNA polymerase epsilon subunit 4 (155 aa).

2 stretches are compositionally biased toward acidic residues: residues 1–16 and 24–48; these read MASE…EEQD and ETEE…DNPE. The segment at 1–76 is disordered; it reads MASEELFEAE…APADNEAKMT (76 aa). Residues 49 to 65 show a composition bias toward polar residues; that stretch reads AESTTEQLTEKPVTNGN.

In terms of assembly, component of the DNA polymerase epsilon complex consisting of four subunits: the catalytic subunit PolE1/DNApol-epsilon255 and the accessory subunits PolE2/DNApol-epsilon58, Chrac-14/DNApolE3 and PolE4/Mes4.

Its subcellular location is the nucleus. In terms of biological role, accessory component of the DNA polymerase epsilon complex. Participates in DNA repair and in chromosomal DNA replication. Has a role in cell cycle progression. Required for wing morphogenesis. In Drosophila melanogaster (Fruit fly), this protein is DNA polymerase epsilon subunit 4.